The sequence spans 266 residues: Small ribosomal subunit protein uS2 (266 aa).

The disordered stretch occupies residues 247–266; that stretch reads EGENNYSNNRSWNKPERTNN. A compositionally biased stretch (polar residues) spans 249 to 258; it reads ENNYSNNRSW.

Belongs to the universal ribosomal protein uS2 family.

The protein is Small ribosomal subunit protein uS2 of Mesoplasma florum (strain ATCC 33453 / NBRC 100688 / NCTC 11704 / L1) (Acholeplasma florum).